The chain runs to 137 residues: Universal stress protein in QAH/OAS sulfhydrylase 3'region (137 aa).

Belongs to the universal stress protein A family.

This chain is Universal stress protein in QAH/OAS sulfhydrylase 3'region, found in Thermus aquaticus.